A 1100-amino-acid polypeptide reads, in one-letter code: Sorbin and SH3 domain-containing protein 2 (1100 aa).

Residues Tyr-13, Ser-14, His-27, Gly-28, Ser-30, and Ser-43 each carry the phosphoserine modification. Residues 30-52 (SLDSTDTYPQHAQSLDGTTSSSI) show a composition bias toward polar residues. The interval 30 to 57 (SLDSTDTYPQHAQSLDGTTSSSIPLYRS) is disordered. The region spanning 66 to 127 (VIKAPHYPGI…YNTPYTYNAG (62 aa)) is the SoHo domain. A compositionally biased stretch (polar residues) spans 134–147 (SAQSHPAAKTQTYR). Residues 134-311 (SAQSHPAAKT…SPSRAKGGDD (178 aa)) are disordered. His-153 is subject to Alanine amide. Residues Ser-154 and Ser-157 each carry the phosphoserine modification. The segment covering 167–180 (PVPPPHVPPPVPPL) has biased composition (pro residues). A compositionally biased stretch (basic and acidic residues) spans 181-217 (RPRDRSSTEKHDWDPPDRKVDTRKFRSEPRSIFEYEP). Phosphothreonine is present on residues Ser-234 and Ile-236. Phosphoserine is present on residues Ser-239, Ser-245, Ser-248, Lys-258, Ser-259, and Glu-260. Phosphothreonine is present on residues Thr-277, Gly-280, and Val-282. Ser-287 carries the post-translational modification Phosphoserine. Positions 287 to 304 (SSTTLTKSFTSSSPSSPS) are enriched in low complexity. Position 292 is a phosphothreonine (Thr-292). Phosphoserine occurs at positions 295, 297, 298, 299, 301, 302, 304, 306, 311, and 316. Residues Ser-320, Ser-322, and Gly-326 each carry the phosphothreonine modification. A phosphoserine mark is found at His-341, Val-344, and Arg-346. The residue at position 366 (Glu-366) is a Phosphothreonine. Phosphoserine is present on residues Ser-381 and Ser-383. Phosphothreonine is present on residues Asp-413 and Lys-415. 2 positions are modified to phosphoserine: Arg-437 and Arg-439. Ile-459 bears the Phosphothreonine mark. Residues Lys-474, Ser-494, Ser-497, Ser-550, and Ser-750 each carry the phosphoserine modification. A disordered region spans residues 807–866 (RMPRSASFQDVDTANSSCHHQDRGGALQDRESPRSYSSTLTDMGRSAPRERRGTPEKEKL). Residues 812–824 (ASFQDVDTANSSC) show a composition bias toward polar residues. Basic and acidic residues predominate over residues 825-839 (HHQDRGGALQDRESP). The residue at position 843 (Ser-843) is a Phosphoserine. A compositionally biased stretch (basic and acidic residues) spans 853–866 (APRERRGTPEKEKL). 2 consecutive SH3 domains span residues 863-922 (KEKL…KLTP) and 938-999 (GEIG…VVKK). 2 positions are modified to phosphoserine: Ser-1017 and Ser-1023. The 60-residue stretch at 1041 to 1100 (GGGEPFQALYNYTPRNEDELELRESDVIDVMEKCDDGWFVGTSRRTKFFGTFPGNYVKRL) folds into the SH3 3 domain.

Interacts with ABL, CBL, DNM1, DNM2, FLOT1, AFDN, PTK2B/PYK2, SAPAP, SPTAN1, SYNJ1, SYNJ2, VCL/vinculin and WASF. Interacts with ABL1/c-Abl, ABL2/v-Abl/Arg, ACTN, CBL and PALLD. Interacts with PTPN12 and WASF1 via its SH3 domains; this interaction may mediate the partial PTPN12 and WASF1 translocation to focal adhesion sites. Ubiquitinated by CBL. Post-translationally, dephosphorylated by PTPN12. Abundantly expressed in heart. In cardiac muscle cells, located in the Z-disks of sarcomere. Also found, but to a lower extent, in small and large intestine, pancreas, thymus, colon, spleen, prostate, testis, brain, ovary and epithelial cells. In the pancreas, mainly expressed in acinar cells, duct cells and all cell types in islets (at protein level). Tends to be down-regulated in pancreatic adenocarcinomas ans metastases.

It localises to the cytoplasm. Its subcellular location is the perinuclear region. The protein resides in the apical cell membrane. The protein localises to the cell junction. It is found in the focal adhesion. It localises to the cell projection. Its subcellular location is the lamellipodium. Its function is as follows. Adapter protein that plays a role in the assembling of signaling complexes, being a link between ABL kinases and actin cytoskeleton. Can form complex with ABL1 and CBL, thus promoting ubiquitination and degradation of ABL1. May play a role in the regulation of pancreatic cell adhesion, possibly by acting on WASF1 phosphorylation, enhancing phosphorylation by ABL1, as well as dephosphorylation by PTPN12. Isoform 6 increases water and sodium absorption in the intestine and gall-bladder. This is Sorbin and SH3 domain-containing protein 2 (SORBS2) from Homo sapiens (Human).